A 569-amino-acid polypeptide reads, in one-letter code: Methionine--tRNA ligase (569 aa).

Positions 11 to 21 (PYINGVKHLGN) match the 'HIGH' region motif. Positions 143, 146, 156, and 159 each coordinate Zn(2+). The 'KMSKS' region motif lies at 342–346 (KFSTS). Thr-345 contributes to the ATP binding site.

The protein belongs to the class-I aminoacyl-tRNA synthetase family. MetG type 1 subfamily. Monomer. It depends on Zn(2+) as a cofactor.

It is found in the cytoplasm. It carries out the reaction tRNA(Met) + L-methionine + ATP = L-methionyl-tRNA(Met) + AMP + diphosphate. In terms of biological role, is required not only for elongation of protein synthesis but also for the initiation of all mRNA translation through initiator tRNA(fMet) aminoacylation. The sequence is that of Methionine--tRNA ligase from Caulobacter sp. (strain K31).